Reading from the N-terminus, the 60-residue chain is UPF0337 protein SAV1625 (60 aa).

Residues 18-41 are disordered; that stretch reads VGNVTDNKELEKEGQQDKATGKAK. Residues 23-41 show a composition bias toward basic and acidic residues; that stretch reads DNKELEKEGQQDKATGKAK.

Belongs to the UPF0337 (CsbD) family.

This Staphylococcus aureus (strain Mu50 / ATCC 700699) protein is UPF0337 protein SAV1625.